The following is a 288-amino-acid chain: L-xylulose reductase (288 aa).

NADP(+) contacts are provided by Ile-39, Asn-113, and Lys-147. The active-site Proton donor is the Ser-181. The NADP(+) site is built by Tyr-196, Lys-200, Ile-228, and Thr-230. Tyr-196 (proton acceptor) is an active-site residue. Catalysis depends on Lys-200, which acts as the Lowers pKa of active site Tyr.

Belongs to the short-chain dehydrogenases/reductases (SDR) family.

It catalyses the reaction xylitol + NADP(+) = L-xylulose + NADPH + H(+). It functions in the pathway carbohydrate degradation; L-arabinose degradation via L-arabinitol; D-xylulose 5-phosphate from L-arabinose (fungal route): step 3/5. L-xylulose reductase involved in the catabolism of L-arabinose through an oxidoreductive pathway. Catalyzes the NADPH-dependent reduction of L-xylulose. Is also able to convert D-xylulose, D-ribulose, L-sorbose, and D-fructose to their corresponding polyols. This is L-xylulose reductase from Hypocrea jecorina (strain QM6a) (Trichoderma reesei).